A 150-amino-acid chain; its full sequence is FAD synthase (150 aa).

Residues 10–11 (VF), 15–18 (HPGH), Asp-97, and Tyr-124 each bind ATP.

Belongs to the archaeal FAD synthase family. As to quaternary structure, homodimer. A divalent metal cation is required as a cofactor.

It carries out the reaction FMN + ATP + H(+) = FAD + diphosphate. Its pathway is cofactor biosynthesis; FAD biosynthesis; FAD from FMN: step 1/1. Catalyzes the transfer of the AMP portion of ATP to flavin mononucleotide (FMN) to produce flavin adenine dinucleotide (FAD) coenzyme. This is FAD synthase from Methanopyrus kandleri (strain AV19 / DSM 6324 / JCM 9639 / NBRC 100938).